The chain runs to 321 residues: Cytochrome c biogenesis protein CcsA (321 aa).

A run of 6 helical transmembrane segments spans residues 17–37 (IISI…IVGI), 43–63 (KGII…WIYS), 143–163 (MLLS…FLVI), 225–245 (VISL…VWAN), 258–275 (ETWA…LHTR), and 287–307 (IVAS…NLLG).

The protein belongs to the CcmF/CycK/Ccl1/NrfE/CcsA family. In terms of assembly, may interact with Ccs1.

It localises to the plastid. It is found in the chloroplast thylakoid membrane. Required during biogenesis of c-type cytochromes (cytochrome c6 and cytochrome f) at the step of heme attachment. This Drimys granadensis protein is Cytochrome c biogenesis protein CcsA.